The sequence spans 217 residues: MPDCLETGEKLFVHNMNAQCVQKPEEGNGPLGTGGKIVQGKCFRIISTVSPVKLYCCYGVIMVLTVAVIALSVALSTKKTEQIIINKTYAACSKNWTGVGNKCFYFSGYPRNWTFAQAFCMAQEAQLARFDNEEELIFLKRFKGDFDCWIGLHRESSEHPWKWTNNTEYNNMNPILGVGRYAYLSSDRISSSRSYINRMWICSKLNNYNLHCQTPPV.

The Cytoplasmic portion of the chain corresponds to 1–53; sequence MPDCLETGEKLFVHNMNAQCVQKPEEGNGPLGTGGKIVQGKCFRIISTVSPVK. Residues 54–74 form a helical; Signal-anchor for type II membrane protein membrane-spanning segment; that stretch reads LYCCYGVIMVLTVAVIALSVA. Residues 75-217 lie on the Extracellular side of the membrane; it reads LSTKKTEQII…YNLHCQTPPV (143 aa). Cys-92 and Cys-103 are joined by a disulfide. In terms of domain architecture, C-type lectin spans 99–203; the sequence is VGNKCFYFSG…SYINRMWICS (105 aa). An N-linked (GlcNAc...) asparagine glycan is attached at Asn-112. An intrachain disulfide couples Cys-120 to Cys-202.

As to expression, detected in osteoblasts, growth plate chondrocytes and skeletal muscle overlying the bone (at protein level). Detected in spleen, B-cells, dendritic cells, thymus, and in IL2-activated natural killer cells.

The protein resides in the cell membrane. Functionally, inhibits osteoclast formation. Receptor for KLRB1F. Enhances T-cell activation. Plays a role in splenocyte activation, T-cell responses and IL-2 production. In Mus musculus (Mouse), this protein is C-type lectin domain family 2 member I (Clec2i).